The following is a 918-amino-acid chain: MKNKILNTVLISILLLVVVFFVSTNFIINVQWFKEVGYLNVFFTKLIAICKLFVPIFILYFCVIAIYLFTLRKSIRSLVGDTKFKSVKKYFLLSNLVISILGAGATATTQWYKILQFTNAVPFGEVDPIFNKDISFYVFKLPLVQSLFSTAISLIIILVLITVIIYLALGFKDKIYQNKDNVININSKTYGIRKFAGKQLAVLASVLSLLIGCSYLLKSYNLVYSTRGVSYGAGYTDVKITMIFYKVIAIACVISSIVVFISILKLKFRPIIISIASIAVLIVLEPVVAIFTQQFVVKPNEMELEKPYISYSIDATKKAFNIDEIEVKEMEPNENITSEKLEDNKDIIENLKVNSTGPLLSFYQQVQLIKNYYEFNDADTDRYNINGKYTQVFVSPREINREAMTTWQNKHLRYTHGYGLAMSRVNSVTEFGQPDFVMKDIPTVNTTDINLENPRIYFGESDNDYVIVNTEGGEFDYPTGDTENTFNYNGTGGLKMTPFNRVLFSIYERNPKILMSSSITSESRIILNRNIVKRVQEIAPFLTYDSDPYIVVHDGRLVWMMNAYTSTDKYPFSEPHEGVNYIRNSVKVVVDAFNGNVDFYVTDENDPIINCYLKIYKGLFKPLSEMPEDLKEHFRYPQDLFELQSKVLTKYHVDDPIKLFTEEDLWDRSLDVVKHGGENLSQGDEGKEESILNKAKENKNNEAENEGLYLMTKLPDEENVEMMLLDYFNMRGKQSMVALLGARMDGDNYGELVMYKFPPQRTIYSPILFKNRIQQDPNISKEISLWAGKGSEVIYGDIIIVPIEDSLLYLNTIYLKANSENSMPEMKRVILSNGDKIVIEENIEKALLKLFNYNSFEENKNSNKDETSNTEITSDNSGVKEAADLFNKAIEAQKNGDWATYGEFINKLGDVLNKMSHD.

Helical transmembrane passes span 8-28 (TVLISILLLVVVFFVSTNFII), 46-66 (LIAICKLFVPIFILYFCVIAI), 91-111 (FLLSNLVISILGAGATATTQW), 151-171 (AISLIIILVLITVIIYLALGF), 200-220 (LAVLASVLSLLIGCSYLLKSY), 243-263 (IFYKVIAIACVISSIVVFISI), and 271-291 (IIISIASIAVLIVLEPVVAIF).

Belongs to the UPF0182 family.

It localises to the cell membrane. This Clostridium perfringens (strain SM101 / Type A) protein is UPF0182 protein CPR_0011.